We begin with the raw amino-acid sequence, 387 residues long: Pepsin A (387 aa).

A signal peptide spans 1–15 (MKWLLLLSLVALSEC). Positions 16–61 (LYKVSLIKKKSLRKNLIEHGLLKDFLKNNTLDPASKYFPQGEAATM) are cleaved as a propeptide — activation peptide. Positions 75–384 (YFGTIGIGTP…DRANNQVGLA (310 aa)) constitute a Peptidase A1 domain. Asp-93 is an active-site residue. A disulfide bond links Cys-106 and Cys-111. Position 129 is a phosphoserine (Ser-129). An intrachain disulfide couples Cys-267 to Cys-271. Asp-276 is a catalytic residue. Cys-310 and Cys-343 are disulfide-bonded.

This sequence belongs to the peptidase A1 family.

It localises to the secreted. It carries out the reaction Preferential cleavage: hydrophobic, preferably aromatic, residues in P1 and P1' positions. Cleaves 1-Phe-|-Val-2, 4-Gln-|-His-5, 13-Glu-|-Ala-14, 14-Ala-|-Leu-15, 15-Leu-|-Tyr-16, 16-Tyr-|-Leu-17, 23-Gly-|-Phe-24, 24-Phe-|-Phe-25 and 25-Phe-|-Tyr-26 bonds in the B chain of insulin.. Inhibited by pepstatin. In terms of biological role, shows particularly broad specificity; although bonds involving phenylalanine and leucine are preferred, many others are also cleaved to some extent. This chain is Pepsin A (PGA), found in Callithrix jacchus (White-tufted-ear marmoset).